A 257-amino-acid polypeptide reads, in one-letter code: Zinc transporter ZupT (257 aa).

A run of 5 helical transmembrane segments spans residues 5 to 25, 32 to 52, 61 to 81, 109 to 129, and 137 to 157; these read LILTLLAGAATFIGAFLAVLG, VLAFSLGFAAGIMLLISLMEM, GMSPVLGYGMFIIGLLGYFGL, AILLTLGISLHNFPEGIATFV, and LGMGIALAVALHNIPEGLAVA. Residues Asn-120 and Glu-123 each coordinate Fe(2+). 2 residues coordinate Zn(2+): Glu-123 and His-148. 3 residues coordinate Fe(2+): Asn-149, Glu-152, and Glu-181. Glu-152 is a Zn(2+) binding site. The next 3 helical transmembrane spans lie at 182–202, 203–223, and 236–256; these read ILGGVLAWLILGSLISPVVMA, AVMAAVAGIMVALSVDELMPL, and GVLCGMSVMGLSLVVLQTAGI.

This sequence belongs to the ZIP transporter (TC 2.A.5) family. ZupT subfamily.

The protein resides in the cell inner membrane. It catalyses the reaction Zn(2+)(in) = Zn(2+)(out). Mediates zinc uptake. May also transport other divalent cations. In Escherichia fergusonii (strain ATCC 35469 / DSM 13698 / CCUG 18766 / IAM 14443 / JCM 21226 / LMG 7866 / NBRC 102419 / NCTC 12128 / CDC 0568-73), this protein is Zinc transporter ZupT.